Here is a 104-residue protein sequence, read N- to C-terminus: Protein ArtA (104 aa).

The protein is Protein ArtA (artA) of Escherichia coli (strain K12).